We begin with the raw amino-acid sequence, 248 residues long: Tetrachloro-P-hydroquinone reductive dehalogenase (248 aa).

In terms of domain architecture, GST N-terminal spans 2-84; the sequence is PEVSLYNYTM…EAAKLGKVGI (83 aa). The GST C-terminal domain occupies 133 to 248; that stretch reads YAEKYPELRS…RVMPNWKGGI (116 aa).

This sequence belongs to the GST superfamily. Homodimer.

It carries out the reaction 2,6-dichlorohydroquinone + glutathione disulfide + chloride + H(+) = 2,3,6-trichlorohydroquinone + 2 glutathione. The catalysed reaction is 2,3,6-trichlorohydroquinone + glutathione disulfide + chloride = 2,3,5,6-tetrachlorohydroquinone + 2 glutathione. The protein operates within xenobiotic degradation; pentachlorophenol degradation. Its function is as follows. Sequential reduction of tetrachloro-p-hydroquinone to monochlorophenol, using glutathione as the reducing agent. In Sphingobium chlorophenolicum, this protein is Tetrachloro-P-hydroquinone reductive dehalogenase (pcpC).